The chain runs to 298 residues: MASNVTNKTDPRSMNSRVFIGNLNTLVVKKSDVEAIFSKYGKIVGCSVHKGFAFVQYVNERNARAAVAGEDGRMIAGQVLDINLAAEPKVNRGKAGVKRSAAEMYGSSFDLDYDFQRDYYDRMYSYPARVPPPPPIARAVVPSKRQRVSGNTSRRGKSGFNSKSGQRGSSSKSVKGDDLQAIKKELTQIKQKVDSLLESLEKIEKEQSKQADLSFSSPVEMKNEKSEEEQSSASVKKDETNVKMESEAGADDSAEEGDLLDDDDNEDRGDDQLELKDDEKEPEEGEDDRDSANGEDDS.

Ala-2 carries the post-translational modification N-acetylalanine. Residues Lys-8, Lys-50, Lys-89, and Lys-94 each participate in a glycyl lysine isopeptide (Lys-Gly) (interchain with G-Cter in SUMO2) cross-link. In terms of domain architecture, RRM spans 16-87 (SRVFIGNLNT…QVLDINLAAE (72 aa)). Residue Ser-108 is modified to Phosphoserine. 2 disordered regions span residues 131–177 (PPPP…VKGD) and 204–298 (EKEQ…EDDS). Positions 142–148 (PSKRQRV) match the Nuclear localization signal motif. Residues Ser-149 and Ser-153 each carry the phosphoserine modification. The segment covering 162 to 173 (SKSGQRGSSSKS) has biased composition (low complexity). The residue at position 163 (Lys-163) is an N6-acetyllysine; alternate. Lys-163 participates in a covalent cross-link: Glycyl lysine isopeptide (Lys-Gly) (interchain with G-Cter in SUMO2); alternate. A coiled-coil region spans residues 176–211 (GDDLQAIKKELTQIKQKVDSLLESLEKIEKEQSKQA). A Glycyl lysine isopeptide (Lys-Gly) (interchain with G-Cter in SUMO2) cross-link involves residue Lys-209. A phosphoserine mark is found at Ser-214, Ser-216, and Ser-217. Lys-222 is covalently cross-linked (Glycyl lysine isopeptide (Lys-Gly) (interchain with G-Cter in SUMO2)). Lys-225 participates in a covalent cross-link: Glycyl lysine isopeptide (Lys-Gly) (interchain with G-Cter in SUMO2); alternate. A Glycyl lysine isopeptide (Lys-Gly) (interchain with G-Cter in SUMO1); alternate cross-link involves residue Lys-225. Phosphoserine occurs at positions 226, 231, 232, and 234. Basic and acidic residues predominate over residues 235–246 (VKKDETNVKMES). Residues Lys-236 and Lys-237 each participate in a glycyl lysine isopeptide (Lys-Gly) (interchain with G-Cter in SUMO2) cross-link. Lys-243 participates in a covalent cross-link: Glycyl lysine isopeptide (Lys-Gly) (interchain with G-Cter in SUMO2); alternate. Lys-243 is covalently cross-linked (Glycyl lysine isopeptide (Lys-Gly) (interchain with G-Cter in SUMO); alternate). Phosphoserine occurs at positions 246 and 253. The segment covering 248–269 (AGADDSAEEGDLLDDDDNEDRG) has biased composition (acidic residues). A compositionally biased stretch (basic and acidic residues) spans 270–279 (DDQLELKDDE). Residues 280 to 298 (KEPEEGEDDRDSANGEDDS) are compositionally biased toward acidic residues. Ser-291 and Ser-298 each carry phosphoserine.

Belongs to the RRM HNRPC family. RALY subfamily. As to quaternary structure, tetramer composed of 3 copies of isoform C1 and 1 copy of isoform C2. Assembly of 3 tetramers with bound pre-mRNA gives rise to a 19S complex that interacts with HNRNPA2B1 tetramers. Component of the 40S hnRNP particle. Identified in the spliceosome C complex. Interacts with IGF2BP1. Interacts with PPIA/CYPA. In terms of processing, phosphorylated on Ser-253 and Ser-291 in resting cells. Post-translationally, sumoylated. Sumoylation reduces affinity for mRNA. Ubiquitinated and degraded after nucleo-cytoplasmic transport by YWHAE.

The protein localises to the nucleus. Binds pre-mRNA and nucleates the assembly of 40S hnRNP particles. Interacts with poly-U tracts in the 3'-UTR or 5'-UTR of mRNA and modulates the stability and the level of translation of bound mRNA molecules. Single HNRNPC tetramers bind 230-240 nucleotides. Trimers of HNRNPC tetramers bind 700 nucleotides. May play a role in the early steps of spliceosome assembly and pre-mRNA splicing. N6-methyladenosine (m6A) has been shown to alter the local structure in mRNAs and long non-coding RNAs (lncRNAs) via a mechanism named 'm(6)A-switch', facilitating binding of HNRNPC, leading to regulation of mRNA splicing. This is Heterogeneous nuclear ribonucleoprotein C from Rattus norvegicus (Rat).